The following is a 60-amino-acid chain: Large ribosomal subunit protein uL30 (60 aa).

The protein belongs to the universal ribosomal protein uL30 family. As to quaternary structure, part of the 50S ribosomal subunit.

This chain is Large ribosomal subunit protein uL30, found in Paracidovorax citrulli (strain AAC00-1) (Acidovorax citrulli).